Reading from the N-terminus, the 25-residue chain is uncharacterized protein (25 aa).

It localises to the plastid. The protein localises to the chloroplast. This is an uncharacterized protein from Trieres chinensis (Marine centric diatom).